Here is a 90-residue protein sequence, read N- to C-terminus: UPF0335 protein Smed_2680 (90 aa).

This sequence belongs to the UPF0335 family.

This Sinorhizobium medicae (strain WSM419) (Ensifer medicae) protein is UPF0335 protein Smed_2680.